We begin with the raw amino-acid sequence, 451 residues long: MADNTPTTANDFLNGAAQVAKSPEEIAKENDLLPKLITHLDRHLIFPLLQFVADQDEEPSPEITKAKFELLKKTNMTDYVASLYCEIEGVEEPPKEYATKRQEILQRLEIFGQESEKITDLLGREDVVTGLRSDKVANLEFLKKEHDVTIDMVNVLYDFGNFQYSCGNYGAAAELLYQFRVLSTDDDKVTAATWGKLACEILTGNWESAMEEVQKVKELIETKLFNKPVAQLNHRTWLIHWALFPFFNHEPARDVICDLFFSPAFINTIQTACPWILRYLTAAVITNRNRTRNTGQYQKQLKDIIRIVKQENYEYSDPVTDFIKALYLDFDFEEAQKKLSEAEEVLRSDFFLVAASENFVEAARHLISESYCKIHQRIDIKDLSARLGLNQDEGEKWIVNLIRDTRVDAKIDYKEGTVVMNHPPSSVYQQVIERTKGGFFRTQVLSAAVAK.

Residues 245–425 enclose the PCI domain; the sequence is PFFNHEPARD…GTVVMNHPPS (181 aa).

This sequence belongs to the eIF-3 subunit E family. Component of the eukaryotic translation initiation factor 3 (eIF-3) complex.

Its subcellular location is the cytoplasm. Functionally, component of the eukaryotic translation initiation factor 3 (eIF-3) complex, which is involved in protein synthesis of a specialized repertoire of mRNAs and, together with other initiation factors, stimulates binding of mRNA and methionyl-tRNAi to the 40S ribosome. The eIF-3 complex specifically targets and initiates translation of a subset of mRNAs involved in cell proliferation. This Sclerotinia sclerotiorum (strain ATCC 18683 / 1980 / Ss-1) (White mold) protein is Eukaryotic translation initiation factor 3 subunit E (int6).